Consider the following 173-residue polypeptide: Peptide deformylase (173 aa).

Residues C94 and H136 each coordinate Fe cation. E137 is an active-site residue. H140 is a binding site for Fe cation.

Belongs to the polypeptide deformylase family. Fe(2+) is required as a cofactor.

The enzyme catalyses N-terminal N-formyl-L-methionyl-[peptide] + H2O = N-terminal L-methionyl-[peptide] + formate. In terms of biological role, removes the formyl group from the N-terminal Met of newly synthesized proteins. Requires at least a dipeptide for an efficient rate of reaction. N-terminal L-methionine is a prerequisite for activity but the enzyme has broad specificity at other positions. The sequence is that of Peptide deformylase from Desulfosudis oleivorans (strain DSM 6200 / JCM 39069 / Hxd3) (Desulfococcus oleovorans).